Consider the following 142-residue polypeptide: Transcriptional regulator MraZ (142 aa).

2 SpoVT-AbrB domains span residues 5–51 and 77–120; these read ASSL…PRTE and AMDV…DKAT.

Belongs to the MraZ family. Forms oligomers.

Its subcellular location is the cytoplasm. It is found in the nucleoid. The protein is Transcriptional regulator MraZ of Delftia acidovorans (strain DSM 14801 / SPH-1).